We begin with the raw amino-acid sequence, 150 residues long: Large ribosomal subunit protein bL9 (150 aa).

It belongs to the bacterial ribosomal protein bL9 family.

Its function is as follows. Binds to the 23S rRNA. The protein is Large ribosomal subunit protein bL9 of Cupriavidus taiwanensis (strain DSM 17343 / BCRC 17206 / CCUG 44338 / CIP 107171 / LMG 19424 / R1) (Ralstonia taiwanensis (strain LMG 19424)).